The following is a 279-amino-acid chain: Nitrate import permease protein NrtB (279 aa).

A run of 5 helical transmembrane segments spans residues 25–45 (FLPYVVCLPIFLAIWQVISAI), 91–111 (VAIGYLLAACTGILVGGVLGM), 149–169 (AIFVIFITAIWPIIINTAVGI), 200–220 (VPYVFAGLRIAVGLAWLAIVA), and 249–269 (IILAIFYVGLVGLSLDRLVAW). Residues 84-267 (ILISLQRVAI…LVGLSLDRLV (184 aa)) form the ABC transmembrane type-1 domain.

This sequence belongs to the binding-protein-dependent transport system permease family. CysTW subfamily. The complex is composed of two ATP-binding proteins (NrtC and NrtD), two transmembrane proteins (NrtB) and a solute-binding protein (NrtA).

It localises to the cell inner membrane. Part of the ABC transporter complex NrtABCD involved in nitrate uptake. The complex is probably also involved in nitrite transport. Probably responsible for the translocation of the substrate across the membrane. The sequence is that of Nitrate import permease protein NrtB from Synechococcus elongatus (strain ATCC 33912 / PCC 7942 / FACHB-805) (Anacystis nidulans R2).